The following is a 347-amino-acid chain: Heat-inducible transcription repressor HrcA (347 aa).

This sequence belongs to the HrcA family.

In terms of biological role, negative regulator of class I heat shock genes (grpE-dnaK-dnaJ and groELS operons). Prevents heat-shock induction of these operons. The sequence is that of Heat-inducible transcription repressor HrcA from Laribacter hongkongensis (strain HLHK9).